We begin with the raw amino-acid sequence, 181 residues long: Organ-specific protein S2 (181 aa).

4 repeat units span residues 59 to 84 (HAKENMGAIGEFEPRPYASAYGDNEI), 85 to 110 (HAKENMGAIGEFEPRPNASAYGDNEI), 111 to 136 (HANENKGASGEFEPRPNISAYGDNEI), and 137 to 162 (HANENKGAIGEFETRPNASAYGDNEI). The 4 X 26 AA tandem repeats stretch occupies residues 59–162 (HAKENMGAIG…NASAYGDNEI (104 aa)). Residues 94–181 (GEFEPRPNAS…PRPSMTKYNA (88 aa)) form a disordered region.

This sequence to organ specific protein P4. Expressed in stems.

The polypeptide is Organ-specific protein S2 (Pisum sativum (Garden pea)).